A 457-amino-acid chain; its full sequence is Argininosuccinate lyase (457 aa).

It belongs to the lyase 1 family. Argininosuccinate lyase subfamily.

The protein resides in the cytoplasm. It carries out the reaction 2-(N(omega)-L-arginino)succinate = fumarate + L-arginine. The protein operates within amino-acid biosynthesis; L-arginine biosynthesis; L-arginine from L-ornithine and carbamoyl phosphate: step 3/3. This is Argininosuccinate lyase from Escherichia coli O9:H4 (strain HS).